Here is a 471-residue protein sequence, read N- to C-terminus: A-type ATP synthase subunit B (471 aa).

The protein belongs to the ATPase alpha/beta chains family. Has multiple subunits with at least A(3), B(3), C, D, E, F, H, I and proteolipid K(x).

The protein resides in the cell membrane. Functionally, component of the A-type ATP synthase that produces ATP from ADP in the presence of a proton gradient across the membrane. The B chain is a regulatory subunit. The polypeptide is A-type ATP synthase subunit B (Ignicoccus hospitalis (strain KIN4/I / DSM 18386 / JCM 14125)).